Here is a 266-residue protein sequence, read N- to C-terminus: Type 1 encapsulin shell protein (266 aa).

This sequence belongs to the encapsulin family. Family 1 subfamily. In terms of assembly, this encapsulin nanocompartment is formed by 60 subunits; monomers form 12 pentamers which assemble to form shells. Shells are loaded with 4 encapsulated ferritin-like protein decamers (EncFtn) in a tetrahedral arrangement. A 3 nm gap is consistently seen between the shell and the cargo.

The protein resides in the encapsulin nanocompartment. Its function is as follows. Shell component of a type 1 encapsulin nanocompartment. Assembles into proteinaceous shells about 21 nm in diameter. Small pores form at, or close to, the 2-, 3-, and 5-fold symmetry axes. Data analysis suggests the 5-fold pores open and close with maximal and minimal aperatures of 15 and 5 Angstroms. Cargo protein Fer (ferritin-like protein, probably stores iron) is targeted to the interior via its C-terminal extension; empty intact shells can be isolated in the absence of cargo protein. In Haliangium ochraceum (strain DSM 14365 / JCM 11303 / SMP-2), this protein is Type 1 encapsulin shell protein.